Consider the following 82-residue polypeptide: Small ribosomal subunit protein bS16 (82 aa).

This sequence belongs to the bacterial ribosomal protein bS16 family.

This Synechocystis sp. (strain ATCC 27184 / PCC 6803 / Kazusa) protein is Small ribosomal subunit protein bS16.